Reading from the N-terminus, the 640-residue chain is Influenza virus NS1A-binding protein homolog B (640 aa).

Residues Cys32–Lys100 enclose the BTB domain. Positions Ala135 to Asn186 constitute a BACK domain. Residues Lys257 to Asn278 form a disordered region. Residues Gly267–Asn278 show a composition bias toward low complexity. 6 Kelch repeats span residues Lys366–Gly412, Glu413–Asn460, Leu462–Gly509, Tyr510–Gly556, Lys557–Asn603, and Leu605–Asn640.

It localises to the cytoplasm. The protein localises to the cytoskeleton. The protein resides in the nucleus. In terms of biological role, plays a role in cell division and in the dynamic organization of the actin skeleton as a stabilizer of actin filaments by association with F-actin through Kelch repeats. This Danio rerio (Zebrafish) protein is Influenza virus NS1A-binding protein homolog B (ivns1abpb).